A 215-amino-acid polypeptide reads, in one-letter code: Probable phosphoglycerate mutase GpmB (215 aa).

Substrate is bound by residues 8-15 (RHGETQWN), 21-22 (QG), Arg58, Arg60, 82-85 (ELDM), 104-105 (RR), and 151-152 (GI). The active-site Tele-phosphohistidine intermediate is the His9. Glu82 (proton donor/acceptor) is an active-site residue.

This sequence belongs to the phosphoglycerate mutase family. GpmB subfamily.

The catalysed reaction is (2R)-2-phosphoglycerate = (2R)-3-phosphoglycerate. The protein operates within carbohydrate degradation; glycolysis; pyruvate from D-glyceraldehyde 3-phosphate: step 3/5. In Klebsiella pneumoniae (strain 342), this protein is Probable phosphoglycerate mutase GpmB.